Reading from the N-terminus, the 164-residue chain is 3-isopropylmalate dehydratase small subunit 2 (164 aa).

The protein belongs to the LeuD family. LeuD type 2 subfamily. As to quaternary structure, heterodimer of LeuC and LeuD.

The catalysed reaction is (2R,3S)-3-isopropylmalate = (2S)-2-isopropylmalate. The protein operates within amino-acid biosynthesis; L-leucine biosynthesis; L-leucine from 3-methyl-2-oxobutanoate: step 2/4. Its function is as follows. Catalyzes the isomerization between 2-isopropylmalate and 3-isopropylmalate, via the formation of 2-isopropylmaleate. The protein is 3-isopropylmalate dehydratase small subunit 2 (leuD2) of Pyrococcus furiosus (strain ATCC 43587 / DSM 3638 / JCM 8422 / Vc1).